Reading from the N-terminus, the 142-residue chain is Small ribosomal subunit protein uS12 (142 aa).

The disordered stretch occupies residues 1–44; it reads MTNGKYAARKLKKDRQQRRWSDSEYARRERGLGKKSDPLEGAPQ. Basic residues predominate over residues 7–16; that stretch reads AARKLKKDRQ. Over residues 17–38 the composition is skewed to basic and acidic residues; it reads QRRWSDSEYARRERGLGKKSDP.

This sequence belongs to the universal ribosomal protein uS12 family. As to quaternary structure, part of the 30S ribosomal subunit.

Functionally, with S4 and S5 plays an important role in translational accuracy. Located at the interface of the 30S and 50S subunits. The chain is Small ribosomal subunit protein uS12 from Halobacterium salinarum (strain ATCC 29341 / DSM 671 / R1).